We begin with the raw amino-acid sequence, 443 residues long: uncharacterized protein (443 aa).

10 helical membrane-spanning segments follow: residues 7 to 29 (VSLYISFVLIICALSKNIMMLNT), 68 to 87 (YISSYSYILYTYVLFISIFT), 94 to 111 (VLSLFLKVIYIYSLYAIF), 121 to 143 (VTLFTFFILAFLMCSSSTLSMFA), 150 to 164 (IVIIFLPFLVYSLTC), 179 to 201 (IISTAKNQFILTPLIVYSYYIFF), 206 to 225 (LIIKSVICVVCLLASIFAIS), 358 to 375 (IRFISLLLFFIASIFIRN), 382 to 399 (LFVVSLFGISQFYVSFFG), and 409 to 431 (LFGMYFSFDLCLYITVVFLIYKI).

Its subcellular location is the cell membrane. This is an uncharacterized protein from Escherichia coli (strain K12).